The primary structure comprises 442 residues: Histidine--tRNA ligase (442 aa).

It belongs to the class-II aminoacyl-tRNA synthetase family. As to quaternary structure, homodimer.

The protein localises to the cytoplasm. The enzyme catalyses tRNA(His) + L-histidine + ATP = L-histidyl-tRNA(His) + AMP + diphosphate + H(+). This is Histidine--tRNA ligase (hisS) from Helicobacter pylori (strain J99 / ATCC 700824) (Campylobacter pylori J99).